The chain runs to 894 residues: RNA polymerase I-specific transcription initiation factor RRN6 (894 aa).

A disordered region spans residues 803-894; sequence PPFNLNSQSQ…KKKKRIRGFG (92 aa). 3 stretches are compositionally biased toward polar residues: residues 806–823, 832–849, and 863–880; these read NLNS…QSSG, KTQS…QNLS, and QPPS…PRNS. Residues 881-894 are compositionally biased toward basic residues; it reads QKAKKKKKRIRGFG.

Component of the core factor (CF) complex, which consists of RRN6, RRN7 and RRN11. The CF heterotrimer may further dimerize to form a hexamer. RRN6 interacts with RRN7, RRN11 and RRN9.

It is found in the cytoplasm. The protein resides in the nucleus. The protein localises to the nucleolus. Functionally, acts as a component of the core factor (CF) complex which is essential for the initiation of rDNA transcription by RNA polymerase I. After binding of UAF (upstream activation factor) to an upstream element of the promoter, CF is recruited in a SPT15/TBP-dependent manner to form a preinitiation complex. This Saccharomyces cerevisiae (strain ATCC 204508 / S288c) (Baker's yeast) protein is RNA polymerase I-specific transcription initiation factor RRN6 (RRN6).